Reading from the N-terminus, the 240-residue chain is UDP-2,3-diacylglucosamine hydrolase (240 aa).

Positions 8, 10, 41, 79, and 114 each coordinate Mn(2+). Residue 79–80 participates in substrate binding; sequence NR. Substrate-binding residues include Asp-122, Ser-160, Asn-164, Lys-167, and His-195. Residues His-195 and His-197 each contribute to the Mn(2+) site.

It belongs to the LpxH family. It depends on Mn(2+) as a cofactor.

It localises to the cell inner membrane. The enzyme catalyses UDP-2-N,3-O-bis[(3R)-3-hydroxytetradecanoyl]-alpha-D-glucosamine + H2O = 2-N,3-O-bis[(3R)-3-hydroxytetradecanoyl]-alpha-D-glucosaminyl 1-phosphate + UMP + 2 H(+). The protein operates within glycolipid biosynthesis; lipid IV(A) biosynthesis; lipid IV(A) from (3R)-3-hydroxytetradecanoyl-[acyl-carrier-protein] and UDP-N-acetyl-alpha-D-glucosamine: step 4/6. Its function is as follows. Hydrolyzes the pyrophosphate bond of UDP-2,3-diacylglucosamine to yield 2,3-diacylglucosamine 1-phosphate (lipid X) and UMP by catalyzing the attack of water at the alpha-P atom. Involved in the biosynthesis of lipid A, a phosphorylated glycolipid that anchors the lipopolysaccharide to the outer membrane of the cell. The protein is UDP-2,3-diacylglucosamine hydrolase of Shigella dysenteriae serotype 1 (strain Sd197).